We begin with the raw amino-acid sequence, 218 residues long: uncharacterized protein (218 aa).

The segment at 154 to 199 adopts an RING-type zinc-finger fold; that stretch reads CFICTMEYSRTDKNLHPIILNCGHNLCRSCINKLTGNGIVKCPFDR.

This is an uncharacterized protein from Caenorhabditis elegans.